The chain runs to 541 residues: 3-oxoacyl-[acyl-carrier-protein] synthase II, chloroplastic (541 aa).

The N-terminal 103 residues, 1–103 (MVGASSSYAS…NRNQRRLNRA (103 aa)), are a transit peptide targeting the chloroplast. Residues 129 to 539 (QRRVVVTGMG…GHNSSIIFAP (411 aa)) enclose the Ketosynthase family 3 (KS3) domain. Residues Cys-292, His-432, and His-468 each act as for beta-ketoacyl synthase activity in the active site.

It belongs to the thiolase-like superfamily. Beta-ketoacyl-ACP synthases family. Homodimer. In terms of tissue distribution, mostly expressed in siliques, and, to a lower extent, in leaves, stems, flower buds, and flowers.

It is found in the plastid. The protein resides in the chloroplast stroma. It carries out the reaction a fatty acyl-[ACP] + malonyl-[ACP] + H(+) = a 3-oxoacyl-[ACP] + holo-[ACP] + CO2. In terms of biological role, essential protein that catalyzes the condensation reaction of fatty acid synthesis by the addition to an acyl acceptor of two carbons from malonyl-ACP. Specific for elongation from C-16 and C-16 to unsaturated C-18 fatty acids. Confers resistance to low temperatures by maintaining chloroplast membranes integrity. Involved in the regulation of fatty acids ratios during seed metabolism. Required for embryo development, especially at the transition from the globular to the heart stage. This is 3-oxoacyl-[acyl-carrier-protein] synthase II, chloroplastic (KAS2) from Arabidopsis thaliana (Mouse-ear cress).